The primary structure comprises 426 residues: Gamma-glutamyl phosphate reductase (426 aa).

This sequence belongs to the gamma-glutamyl phosphate reductase family.

The protein localises to the cytoplasm. The enzyme catalyses L-glutamate 5-semialdehyde + phosphate + NADP(+) = L-glutamyl 5-phosphate + NADPH + H(+). It participates in amino-acid biosynthesis; L-proline biosynthesis; L-glutamate 5-semialdehyde from L-glutamate: step 2/2. Its function is as follows. Catalyzes the NADPH-dependent reduction of L-glutamate 5-phosphate into L-glutamate 5-semialdehyde and phosphate. The product spontaneously undergoes cyclization to form 1-pyrroline-5-carboxylate. The chain is Gamma-glutamyl phosphate reductase from Cupriavidus taiwanensis (strain DSM 17343 / BCRC 17206 / CCUG 44338 / CIP 107171 / LMG 19424 / R1) (Ralstonia taiwanensis (strain LMG 19424)).